A 511-amino-acid chain; its full sequence is Steroid 17-alpha-hydroxylase/17,20 lyase (511 aa).

Residue C442 coordinates heme.

It belongs to the cytochrome P450 family. Requires heme as cofactor.

The protein localises to the endoplasmic reticulum membrane. It is found in the microsome membrane. It carries out the reaction a C21-steroid + reduced [NADPH--hemoprotein reductase] + O2 = a 17alpha-hydroxy-C21-steroid + oxidized [NADPH--hemoprotein reductase] + H2O + H(+). The enzyme catalyses progesterone + reduced [NADPH--hemoprotein reductase] + O2 = 17alpha-hydroxyprogesterone + oxidized [NADPH--hemoprotein reductase] + H2O + H(+). The catalysed reaction is pregnenolone + reduced [NADPH--hemoprotein reductase] + O2 = 17alpha-hydroxypregnenolone + oxidized [NADPH--hemoprotein reductase] + H2O + H(+). It catalyses the reaction 17alpha-hydroxyprogesterone + reduced [NADPH--hemoprotein reductase] + O2 = androst-4-ene-3,17-dione + acetate + oxidized [NADPH--hemoprotein reductase] + H2O + 2 H(+). It carries out the reaction 17alpha-hydroxyprogesterone + reduced [NADPH--hemoprotein reductase] + O2 = 16alpha,17alpha-dihydroxyprogesterone + oxidized [NADPH--hemoprotein reductase] + H2O + H(+). The enzyme catalyses 16alpha,17alpha-dihydroxyprogesterone + reduced [NADPH--hemoprotein reductase] + O2 = 6beta,16alpha,17alpha-trihydroxyprogesterone + oxidized [NADPH--hemoprotein reductase] + H2O + H(+). The catalysed reaction is 17alpha-hydroxypregnenolone + reduced [NADPH--hemoprotein reductase] + O2 = 3beta-hydroxyandrost-5-en-17-one + acetate + oxidized [NADPH--hemoprotein reductase] + H2O + 2 H(+). It catalyses the reaction 16alpha,17alpha-dihydroxypregnenolone + reduced [NADPH--hemoprotein reductase] + O2 = 3beta,16alpha-dihydroxy-androst-5-en-17-one + acetate + oxidized [NADPH--hemoprotein reductase] + H2O + 2 H(+). It carries out the reaction 3beta-hydroxyandrost-5-en-17-one + reduced [NADPH--hemoprotein reductase] + O2 = 3beta,16alpha-dihydroxy-androst-5-en-17-one + oxidized [NADPH--hemoprotein reductase] + H2O + H(+). The enzyme catalyses androst-4-ene-3,17-dione + reduced [NADPH--hemoprotein reductase] + O2 = 16alpha-hydroxyandrost-4-ene-3,17-dione + oxidized [NADPH--hemoprotein reductase] + H2O + H(+). It functions in the pathway steroid hormone biosynthesis. It participates in steroid biosynthesis; glucocorticoid biosynthesis. Regulated predominantly by intracellular cAMP levels. The 17,20-lyase activity is stimulated by cytochrome b5, which acts as an allosteric effector increasing the Vmax of the lyase activity. Functionally, a cytochrome P450 monooxygenase involved in corticoid and androgen biosynthesis. Catalyzes 17-alpha hydroxylation of C21 steroids, which is common for both pathways. A second oxidative step, required only for androgen synthesis, involves an acyl-carbon cleavage. The 17-alpha hydroxy intermediates, as part of adrenal glucocorticoids biosynthesis pathway, are precursors of cortisol. Hydroxylates steroid hormones, pregnenolone and progesterone to form 17-alpha hydroxy metabolites, followed by the cleavage of the C17-C20 bond to form C19 steroids, dehydroepiandrosterone (DHEA) and androstenedione. Has 16-alpha hydroxylase activity. Catalyzes 16-alpha hydroxylation of 17-alpha hydroxy pregnenolone, followed by the cleavage of the C17-C20 bond to form 16-alpha-hydroxy DHEA. Also 16-alpha hydroxylates androgens, relevant for estriol synthesis. Mechanistically, uses molecular oxygen inserting one oxygen atom into a substrate, and reducing the second into a water molecule, with two electrons provided by NADPH via cytochrome P450 reductase (CPR; NADPH-ferrihemoprotein reductase). The protein is Steroid 17-alpha-hydroxylase/17,20 lyase (CYP17A1) of Mesocricetus auratus (Golden hamster).